Here is a 675-residue protein sequence, read N- to C-terminus: Serine/threonine-protein kinase ATG1 (675 aa).

A Protein kinase domain is found at 25-328; it reads FVIGGEIGKG…FEDFFNDPVV (304 aa). ATP contacts are provided by residues 31 to 39 and lysine 54; that span reads IGKGSFAQV. The Proton acceptor role is filled by aspartate 168. Basic and acidic residues predominate over residues 339 to 374; the sequence is DIPKVEQKPSRDLRSLEADPQREQSELAKSPRERPL. Disordered stretches follow at residues 339–455 and 501–577; these read DIPK…ERKL and RLTS…TTRS. Composition is skewed to polar residues over residues 390 to 399, 516 to 538, and 556 to 565; these read ANVSARTGQS, ATQQ…SAVQ, and ASRSLNTSSA.

The protein belongs to the protein kinase superfamily. Ser/Thr protein kinase family. APG1/unc-51/ULK1 subfamily. Homodimer. Forms a ternary complex with ATG13 and ATG17.

The protein resides in the cytoplasm. The protein localises to the preautophagosomal structure membrane. The enzyme catalyses L-seryl-[protein] + ATP = O-phospho-L-seryl-[protein] + ADP + H(+). It carries out the reaction L-threonyl-[protein] + ATP = O-phospho-L-threonyl-[protein] + ADP + H(+). In terms of biological role, serine/threonine protein kinase involved in the cytoplasm to vacuole transport (Cvt) and found to be essential in autophagy, where it is required for the formation of autophagosomes. Involved in the clearance of protein aggregates which cannot be efficiently cleared by the proteasome. Required for selective autophagic degradation of the nucleus (nucleophagy) as well as for mitophagy which contributes to regulate mitochondrial quantity and quality by eliminating the mitochondria to a basal level to fulfill cellular energy requirements and preventing excess ROS production. Also involved in endoplasmic reticulum-specific autophagic process, in selective removal of ER-associated degradation (ERAD) substrates. Plays a key role in ATG9 and ATG23 cycling through the pre-autophagosomal structure and is necessary to promote ATG18 binding to ATG9 through phosphorylation of ATG9. Catalyzes phosphorylation of ATG4, decreasing the interaction between ATG4 and ATG8 and impairing deconjugation of PE-conjugated forms of ATG8. This chain is Serine/threonine-protein kinase ATG1, found in Colletotrichum lindemuthianum (Bean anthracnose fungus).